A 178-amino-acid polypeptide reads, in one-letter code: MDNTQAIAPPSYSRRQLLNFLAGTTVAVTASAGAYAMGKFFVPPAEKGGAGGGIIAKDVLGNPIPASQILAEAPGTRALVAGLAGDPTYLIVKEDGSLDSIGIVDSCTHLGCTFPWNGNDQEFQCPCHGSRYHPDGSVARGPAPLPLKIVQVAVVDDQIFISPWTDLDPRTGEKPWWV.

A helical membrane pass occupies residues 17–36 (LLNFLAGTTVAVTASAGAYA). Positions 61-161 (GNPIPASQIL…VAVVDDQIFI (101 aa)) constitute a Rieske domain. Residues C107, H109, C125, and H128 each contribute to the [2Fe-2S] cluster site. A disulfide bond links C112 and C127.

It belongs to the Rieske iron-sulfur protein family. The 4 large subunits of the cytochrome b6-f complex are cytochrome b6, subunit IV (17 kDa polypeptide, PetD), cytochrome f and the Rieske protein, while the 4 small subunits are PetG, PetL, PetM and PetN. The complex functions as a dimer. It depends on [2Fe-2S] cluster as a cofactor.

Its subcellular location is the cellular thylakoid membrane. It catalyses the reaction 2 oxidized [plastocyanin] + a plastoquinol + 2 H(+)(in) = 2 reduced [plastocyanin] + a plastoquinone + 4 H(+)(out). Functionally, component of the cytochrome b6-f complex, which mediates electron transfer between photosystem II (PSII) and photosystem I (PSI), cyclic electron flow around PSI, and state transitions. This chain is Cytochrome b6-f complex iron-sulfur subunit 1, found in Synechocystis sp. (strain ATCC 27184 / PCC 6803 / Kazusa).